Consider the following 1386-residue polypeptide: Lysophospholipase NTE1 (1386 aa).

Residues 1–19 (MGPEFEDSIPLVHSDNRTT) are Cytoplasmic-facing. The chain crosses the membrane as a helical span at residues 20–40 (TIYSVYIIISDIFSFVQWLLF). Residues 41–65 (KVLNLIIIDSPAFVLRLLSKNFEIN) are Lumenal-facing. The helical transmembrane segment at 66 to 86 (LHLSSILATLIGVSVVTYLVI) threads the bilayer. Residues 87-1386 (RYKFLTGYSH…KKILYRRNSI (1300 aa)) lie on the Cytoplasmic side of the membrane. The interval 394-416 (EAEAENLPKKLKHHHRNQLQRTT) is disordered. Residues 402 to 411 (KKLKHHHRNQ) show a composition bias toward basic residues. A nucleoside 3',5'-cyclic phosphate-binding positions include 577–701 (KRLL…LKNL) and 697–821 (KLKN…VASK). In terms of domain architecture, PNPLA spans 1081–1245 (LVLGGGGSRG…LDNLPVNEMK (165 aa)). A GXGXXG motif is present at residues 1085 to 1090 (GGGSRG). Positions 1112 to 1116 (GTSIG) match the GXSXG motif. The active-site Nucleophile is Ser-1114. Asp-1232 functions as the Proton acceptor in the catalytic mechanism. The DGA/G motif lies at 1232-1234 (DGG).

Belongs to the NTE family.

The protein localises to the endoplasmic reticulum membrane. The catalysed reaction is a 1-acyl-sn-glycero-3-phosphocholine + H2O = sn-glycerol 3-phosphocholine + a fatty acid + H(+). Inhibited by organophosphorus esters. Functionally, intracellular phospholipase B that catalyzes the double deacylation of phosphatidylcholine (PC) to glycerophosphocholine (GroPCho). Plays an important role in membrane lipid homeostasis. Responsible for the rapid PC turnover in response to inositol, elevated temperatures, or when choline is present in the growth medium. This chain is Lysophospholipase NTE1 (NTE1), found in Candida albicans (strain SC5314 / ATCC MYA-2876) (Yeast).